Reading from the N-terminus, the 178-residue chain is Large ribosomal subunit protein bL17 (178 aa).

The protein belongs to the bacterial ribosomal protein bL17 family. In terms of assembly, part of the 50S ribosomal subunit. Contacts protein L32.

In Lachnospira eligens (strain ATCC 27750 / DSM 3376 / VPI C15-48 / C15-B4) (Eubacterium eligens), this protein is Large ribosomal subunit protein bL17.